The primary structure comprises 190 residues: Protein PLANT CADMIUM RESISTANCE 8 (190 aa).

The segment at 1 to 31 (MGRVTTPSEEDSNNGLPVQQPGTPNQRTRVP) is disordered. Positions 13–28 (NNGLPVQQPGTPNQRT) are enriched in polar residues. The residue at position 23 (T23) is a Phosphothreonine. A helical transmembrane segment spans residues 94–113 (LGTFMYLLMMPALCSHWVMG).

Belongs to the cornifelin family.

The protein localises to the cell membrane. Functionally, may be involved in heavy metals transport. The polypeptide is Protein PLANT CADMIUM RESISTANCE 8 (PCR8) (Arabidopsis thaliana (Mouse-ear cress)).